The sequence spans 379 residues: Alkanesulfonate monooxygenase (379 aa).

The protein belongs to the SsuD family.

It catalyses the reaction an alkanesulfonate + FMNH2 + O2 = an aldehyde + FMN + sulfite + H2O + 2 H(+). In terms of biological role, catalyzes the desulfonation of aliphatic sulfonates. The polypeptide is Alkanesulfonate monooxygenase (Pseudomonas syringae pv. syringae (strain B728a)).